A 237-amino-acid polypeptide reads, in one-letter code: Small ribosomal subunit protein uS2 (237 aa).

The protein belongs to the universal ribosomal protein uS2 family.

This is Small ribosomal subunit protein uS2 from Clostridioides difficile (strain 630) (Peptoclostridium difficile).